We begin with the raw amino-acid sequence, 2185 residues long: DNA polymerase epsilon catalytic subunit A (2185 aa).

Zn(2+) is bound by residues C2072, C2075, C2094, and C2097. The segment at 2072–2097 (CEHCSYISDIDICRESMERVFICQSC) adopts a CysA-type zinc-finger fold. [4Fe-4S] cluster contacts are provided by C2128, C2131, C2143, and C2145. A CysB motif motif is present at residues 2128–2145 (CNKCHKIKEDAMSPYCPC).

It belongs to the DNA polymerase type-B family. As to quaternary structure, heterotetramer. Consists of 4 subunits: POL2, DPB2, DPB3 and DPB4. [4Fe-4S] cluster serves as cofactor.

The protein resides in the nucleus. The catalysed reaction is DNA(n) + a 2'-deoxyribonucleoside 5'-triphosphate = DNA(n+1) + diphosphate. DNA polymerase II participates in chromosomal DNA replication. This Kluyveromyces lactis (strain ATCC 8585 / CBS 2359 / DSM 70799 / NBRC 1267 / NRRL Y-1140 / WM37) (Yeast) protein is DNA polymerase epsilon catalytic subunit A (POL2).